We begin with the raw amino-acid sequence, 427 residues long: Glutamate-1-semialdehyde 2,1-aminomutase (427 aa).

The residue at position 267 (K267) is an N6-(pyridoxal phosphate)lysine.

This sequence belongs to the class-III pyridoxal-phosphate-dependent aminotransferase family. HemL subfamily. In terms of assembly, homodimer. Pyridoxal 5'-phosphate serves as cofactor.

It is found in the cytoplasm. The catalysed reaction is (S)-4-amino-5-oxopentanoate = 5-aminolevulinate. It functions in the pathway porphyrin-containing compound metabolism; protoporphyrin-IX biosynthesis; 5-aminolevulinate from L-glutamyl-tRNA(Glu): step 2/2. The chain is Glutamate-1-semialdehyde 2,1-aminomutase from Geotalea daltonii (strain DSM 22248 / JCM 15807 / FRC-32) (Geobacter daltonii).